The following is a 186-amino-acid chain: Catechol O-methyltransferase (186 aa).

S-adenosyl-L-methionine contacts are provided by residues Val-7, Glu-29, Ser-37, Glu-55, Leu-56, 82 to 85 (GASQ), Ser-84, and Asp-106. Asp-106 provides a ligand contact to Mg(2+). Substrate is bound at residue Lys-109. Mg(2+) is bound by residues Asp-134 and Asn-135. Substrate contacts are provided by Asn-135 and Glu-164. A Phosphoserine modification is found at Ser-182.

It belongs to the class I-like SAM-binding methyltransferase superfamily. Cation-dependent O-methyltransferase family. Mg(2+) serves as cofactor.

The protein resides in the cytoplasm. It is found in the cell membrane. It catalyses the reaction a catechol + S-adenosyl-L-methionine = a guaiacol + S-adenosyl-L-homocysteine + H(+). The enzyme catalyses 2-hydroxyestrone + S-adenosyl-L-methionine = 2-hydroxy-3-methoxy-estrone + S-adenosyl-L-homocysteine + H(+). It carries out the reaction 4-hydroxyestrone + S-adenosyl-L-methionine = 4-methoxyestrone + S-adenosyl-L-homocysteine + H(+). The catalysed reaction is 2-hydroxyestrone + S-adenosyl-L-methionine = 2-methoxyestrone + S-adenosyl-L-homocysteine + H(+). It catalyses the reaction 4-hydroxy-17beta-estradiol + S-adenosyl-L-methionine = 4-methoxy-17beta-estradiol + S-adenosyl-L-homocysteine + H(+). The enzyme catalyses 2-hydroxy-17beta-estradiol + S-adenosyl-L-methionine = 2-hydroxy-3-methoxy-17beta-estradiol + S-adenosyl-L-homocysteine + H(+). It carries out the reaction 2-hydroxy-17beta-estradiol + S-adenosyl-L-methionine = 2-methoxy-17beta-estradiol + S-adenosyl-L-homocysteine + H(+). Functionally, catalyzes the O-methylation, and thereby the inactivation, of catecholamine neurotransmitters and catechol hormones. Also shortens the biological half-lives of certain neuroactive drugs, like L-DOPA, alpha-methyl DOPA and isoproterenol. In Sus scrofa (Pig), this protein is Catechol O-methyltransferase (COMT).